The primary structure comprises 360 residues: Dihydroorotate dehydrogenase (quinone) (360 aa).

FMN-binding positions include 66-70 and T90; that span reads AGFDK. K70 contributes to the substrate binding site. Position 115–119 (115–119) interacts with substrate; the sequence is NRMGF. Residues N143 and N176 each contribute to the FMN site. Residue N176 coordinates substrate. S179 (nucleophile) is an active-site residue. N181 is a binding site for substrate. FMN is bound by residues K212 and T240. 241–242 lines the substrate pocket; the sequence is NT. FMN is bound by residues G264, G293, and 314–315; that span reads YT.

It belongs to the dihydroorotate dehydrogenase family. Type 2 subfamily. Monomer. Requires FMN as cofactor.

It localises to the cell membrane. The catalysed reaction is (S)-dihydroorotate + a quinone = orotate + a quinol. It functions in the pathway pyrimidine metabolism; UMP biosynthesis via de novo pathway; orotate from (S)-dihydroorotate (quinone route): step 1/1. Functionally, catalyzes the conversion of dihydroorotate to orotate with quinone as electron acceptor. The polypeptide is Dihydroorotate dehydrogenase (quinone) (Mycobacterium marinum (strain ATCC BAA-535 / M)).